A 361-amino-acid chain; its full sequence is Holliday junction branch migration complex subunit RuvB (361 aa).

Residues 1-12 (MNWDETGPETDE) are compositionally biased toward acidic residues. Residues 1–21 (MNWDETGPETDEPTGPVLDDR) are disordered. The tract at residues 13–199 (PTGPVLDDRL…FGFTGHMEFY (187 aa)) is large ATPase domain (RuvB-L). Residues Leu38, Arg39, Gly80, Lys83, Thr84, Thr85, 146 to 148 (EDF), Arg189, Tyr199, and Arg236 contribute to the ATP site. Position 84 (Thr84) interacts with Mg(2+). The interval 200–270 (APAELERVLH…IAMAALKVYE (71 aa)) is small ATPAse domain (RuvB-S). Residues 273–361 (ARGLDRLDRA…AKGQQGLFGA (89 aa)) form a head domain (RuvB-H) region. DNA is bound by residues Arg309, Arg328, and Arg333.

The protein belongs to the RuvB family. Homohexamer. Forms an RuvA(8)-RuvB(12)-Holliday junction (HJ) complex. HJ DNA is sandwiched between 2 RuvA tetramers; dsDNA enters through RuvA and exits via RuvB. An RuvB hexamer assembles on each DNA strand where it exits the tetramer. Each RuvB hexamer is contacted by two RuvA subunits (via domain III) on 2 adjacent RuvB subunits; this complex drives branch migration. In the full resolvosome a probable DNA-RuvA(4)-RuvB(12)-RuvC(2) complex forms which resolves the HJ.

The protein localises to the cytoplasm. It catalyses the reaction ATP + H2O = ADP + phosphate + H(+). Functionally, the RuvA-RuvB-RuvC complex processes Holliday junction (HJ) DNA during genetic recombination and DNA repair, while the RuvA-RuvB complex plays an important role in the rescue of blocked DNA replication forks via replication fork reversal (RFR). RuvA specifically binds to HJ cruciform DNA, conferring on it an open structure. The RuvB hexamer acts as an ATP-dependent pump, pulling dsDNA into and through the RuvAB complex. RuvB forms 2 homohexamers on either side of HJ DNA bound by 1 or 2 RuvA tetramers; 4 subunits per hexamer contact DNA at a time. Coordinated motions by a converter formed by DNA-disengaged RuvB subunits stimulates ATP hydrolysis and nucleotide exchange. Immobilization of the converter enables RuvB to convert the ATP-contained energy into a lever motion, pulling 2 nucleotides of DNA out of the RuvA tetramer per ATP hydrolyzed, thus driving DNA branch migration. The RuvB motors rotate together with the DNA substrate, which together with the progressing nucleotide cycle form the mechanistic basis for DNA recombination by continuous HJ branch migration. Branch migration allows RuvC to scan DNA until it finds its consensus sequence, where it cleaves and resolves cruciform DNA. This is Holliday junction branch migration complex subunit RuvB from Streptomyces griseus subsp. griseus (strain JCM 4626 / CBS 651.72 / NBRC 13350 / KCC S-0626 / ISP 5235).